Here is a 314-residue protein sequence, read N- to C-terminus: MASASSVSLMLLVAAAMASAASAQLSATFYDTSCPNALSTIKSAVTAAVNSEPRMGASLVRLHFHDCFVQGCDASVLLSGQEQNAGPNAGSLRGFNVVDNIKTQVEAICSQTVSCADILAVAARDSVVALGGPSWTVLLGRRDSTTANESQANTDLPAPSSSLAELIGNFSRKGLDVTDMVALSGAHTIGQAQCQNFRDRLYNETNIDSSFATALKANCPRPTGSGDSNLAPLDTTTPNAFDSAYYTNLLSNKGLLHSDQVLFNGGSTDNTVRNFSSNTAAFNSAFTAAMVKMGNISPLTGTQGQIRLNCSKVN.

An N-terminal signal peptide occupies residues 1–23; it reads MASASSVSLMLLVAAAMASAASA. Glutamine 24 carries the pyrrolidone carboxylic acid modification. Disulfide bonds link cysteine 34–cysteine 109, cysteine 67–cysteine 72, cysteine 115–cysteine 310, and cysteine 194–cysteine 219. The active-site Proton acceptor is the histidine 65. The Ca(2+) site is built by aspartate 66, valine 69, glycine 71, aspartate 73, and serine 75. N-linked (GlcNAc...) asparagine glycosylation occurs at asparagine 148. Proline 157 contributes to the substrate binding site. N-linked (GlcNAc...) asparagine glycosylation is present at asparagine 169. Heme b is bound at residue histidine 187. Residue threonine 188 coordinates Ca(2+). The N-linked (GlcNAc...) asparagine glycan is linked to asparagine 203. Residues aspartate 234, threonine 237, and aspartate 242 each coordinate Ca(2+). N-linked (GlcNAc...) asparagine glycosylation is found at asparagine 274 and asparagine 309.

It belongs to the peroxidase family. Classical plant (class III) peroxidase subfamily. It depends on Ca(2+) as a cofactor. Requires heme b as cofactor.

The protein localises to the secreted. It carries out the reaction 2 a phenolic donor + H2O2 = 2 a phenolic radical donor + 2 H2O. Its function is as follows. Removal of H(2)O(2), oxidation of toxic reductants, biosynthesis and degradation of lignin, suberization, auxin catabolism, response to environmental stresses such as wounding, pathogen attack and oxidative stress. These functions might be dependent on each isozyme/isoform in each plant tissue. The polypeptide is Peroxidase 2 (PRX112) (Oryza sativa subsp. japonica (Rice)).